A 315-amino-acid chain; its full sequence is tRNA-cytidine(32) 2-sulfurtransferase (315 aa).

Residues 54 to 59 (SGGKDS) carry the PP-loop motif motif. 3 residues coordinate [4Fe-4S] cluster: Cys-129, Cys-132, and Cys-220.

Belongs to the TtcA family. In terms of assembly, homodimer. Requires Mg(2+) as cofactor. It depends on [4Fe-4S] cluster as a cofactor.

The protein resides in the cytoplasm. It carries out the reaction cytidine(32) in tRNA + S-sulfanyl-L-cysteinyl-[cysteine desulfurase] + AH2 + ATP = 2-thiocytidine(32) in tRNA + L-cysteinyl-[cysteine desulfurase] + A + AMP + diphosphate + H(+). It functions in the pathway tRNA modification. Functionally, catalyzes the ATP-dependent 2-thiolation of cytidine in position 32 of tRNA, to form 2-thiocytidine (s(2)C32). The sulfur atoms are provided by the cysteine/cysteine desulfurase (IscS) system. This chain is tRNA-cytidine(32) 2-sulfurtransferase, found in Bordetella avium (strain 197N).